A 431-amino-acid chain; its full sequence is MVTEVSLIEIAKTTRQAAQKSAVLSTEAKNQAIEAVAQALEKATPKIITANQLDCRIAETDGIAKPLYNRLKMDEAKLNSAIEGLRNVATLRDPIGVVQIHRELDAGLILKRITCPLGVIGVVFEARPDAVIQISALAIKSGNGVILKGGKEATNSCLELVTAIRQGLSTTSVNPDGVQLLTTREETLELLKLDEYVDLIIPRGSNSFVKFVQENTQIPVLGHAEGICHVYVDKFADIQKAVKITIDAKTQYPAACNAAETLLVHTDVAAKFLSEVFPELEKRQVELRGDRATQQILSSVKEATDLDWATEYSDLVLSVKVVDSLDSAIAHINNYGSGHTDAIITEDGKAAEIFLAQIGSAGVFHNCSTRFSDGFRYGFGAEVGISTQKMPPRGPVGLEGLVTYKYQIVGDGHIAATYSGENAKPFTHQDF.

The protein belongs to the gamma-glutamyl phosphate reductase family.

The protein localises to the cytoplasm. It catalyses the reaction L-glutamate 5-semialdehyde + phosphate + NADP(+) = L-glutamyl 5-phosphate + NADPH + H(+). Its pathway is amino-acid biosynthesis; L-proline biosynthesis; L-glutamate 5-semialdehyde from L-glutamate: step 2/2. Functionally, catalyzes the NADPH-dependent reduction of L-glutamate 5-phosphate into L-glutamate 5-semialdehyde and phosphate. The product spontaneously undergoes cyclization to form 1-pyrroline-5-carboxylate. In Trichodesmium erythraeum (strain IMS101), this protein is Gamma-glutamyl phosphate reductase.